The sequence spans 150 residues: Large ribosomal subunit protein uL15 (150 aa).

Residues 1 to 15 (MNLSNLQPAEGSTHN) show a composition bias toward polar residues. The tract at residues 1–52 (MNLSNLQPAEGSTHNQNKRLGRGEGSGKGGTSARGHKGAKSRSGYSKKIGFE) is disordered. Over residues 23 to 32 (GEGSGKGGTS) the composition is skewed to gly residues.

It belongs to the universal ribosomal protein uL15 family. Part of the 50S ribosomal subunit.

Binds to the 23S rRNA. This chain is Large ribosomal subunit protein uL15, found in Flavobacterium psychrophilum (strain ATCC 49511 / DSM 21280 / CIP 103535 / JIP02/86).